We begin with the raw amino-acid sequence, 390 residues long: Pre-mycofactocin synthase (390 aa).

The FMN hydroxy acid dehydrogenase domain occupies 1-383; that stretch reads MADEWFETVA…RSDDILIPAD (383 aa). 4 residues coordinate FMN: Ser108, Gln128, Thr156, and Lys254. His278 (proton acceptor) is an active-site residue. Residues 309-313 and 332-333 contribute to the FMN site; these read DGGIR and GR.

This sequence belongs to the FMN-dependent alpha-hydroxy acid dehydrogenase family. Requires FMN as cofactor.

It carries out the reaction 3-amino-5-[(4-hydroxyphenyl)methyl]-4,4-dimethyl-2-pyrrolidin-2-one + O2 + H2O = pre-mycofactocin + H2O2 + NH4(+). Involved in the biosynthesis of the enzyme cofactor mycofactocin (MFT). Catalyzes the oxidative deamination of AHDP (3-amino-5-[(4-hydroxyphenyl)methyl]-4,4-dimethyl-2-pyrrolidin-2-one), forming an alpha-keto amide moiety on the resulting molecule, which is called pre-mycofactocin (PMFT). This reaction occurs via a 5-[(4-hydroxyphenyl)methyl]-3-imino-4,4-dimethylpyrrolidin-2-one intermediate, which converts to PMFT. The alpha-keto amide moiety is the redox-active center for the redox activity of mycofactocin. The protein is Pre-mycofactocin synthase of Mycobacterium ulcerans (strain Agy99).